We begin with the raw amino-acid sequence, 65 residues long: DNA-directed RNA polymerase subunit Rpo10 (65 aa).

The Zn(2+) site is built by Cys7, Cys10, Cys44, and Cys45.

The protein belongs to the archaeal Rpo10/eukaryotic RPB10 RNA polymerase subunit family. In terms of assembly, part of the RNA polymerase complex. Zn(2+) is required as a cofactor.

Its subcellular location is the cytoplasm. The enzyme catalyses RNA(n) + a ribonucleoside 5'-triphosphate = RNA(n+1) + diphosphate. DNA-dependent RNA polymerase (RNAP) catalyzes the transcription of DNA into RNA using the four ribonucleoside triphosphates as substrates. In Nanoarchaeum equitans (strain Kin4-M), this protein is DNA-directed RNA polymerase subunit Rpo10.